Consider the following 370-residue polypeptide: Ubiquitin carboxyl-terminal hydrolase 12 (370 aa).

Positions 1 to 4 (MEIL) match the Required for plasma membrane localization of USP12/WDR20 motif. One can recognise a USP domain in the interval 39–369 (FGLVNFGNTC…SGYILFYQSR (331 aa)). Cys-48 acts as the Nucleophile in catalysis. Residues 145-169 (KQEKQNGRLPNGNIDNENNNSTPDP) form a disordered region. The span at 157–168 (NIDNENNNSTPD) shows a compositional bias: polar residues. Zn(2+) contacts are provided by Cys-186, Cys-189, Cys-233, and Cys-236. His-317 functions as the Proton acceptor in the catalytic mechanism.

Belongs to the peptidase C19 family. USP12/USP46 subfamily. As to quaternary structure, interacts with WDR48. Interacts with WDR20; this interaction promotes translocation of the USP12 complex to the plasma membrane. Component of the USP12-WDR20-WDR48 deubiquitinating complex. Component of the USP12-DMWD-WDR48 deubiquitinating complex. Interacts with PHLPP1. Interacts with RBPJ. Interacts with CBP; this interaction blocks the acetyltransferase activity of CREBBP. Interacts with ITCH; the interaction is more efficient when both USP12 and WDR48/UAF1 are involved and may mediate recruitment of the USP12 deubiquitinating complex to Notch. Interacts with OPTN and SQSTM1/p62; the interaction is independent of deubiquitinase activity and may be involved in regulation of autophagic flux. (Microbial infection) Interacts with Epstein-Barr virus protein EBNA3.

The protein resides in the nucleus. It is found in the cytoplasm. It localises to the cell membrane. The catalysed reaction is Thiol-dependent hydrolysis of ester, thioester, amide, peptide and isopeptide bonds formed by the C-terminal Gly of ubiquitin (a 76-residue protein attached to proteins as an intracellular targeting signal).. Activated by interaction with WDR20, WDR48 and DMWD through different allosteric mechanisms. In terms of biological role, deubiquitinating enzyme that plays various roles in the regulation of the immune response and inflammation. During TCR engagement and activation, translocates into the cytoplasm and deubiquitinates its substrates LAT and TRAT1 and prevents their lysosome-dependent degradation to stabilize the TCR signaling complex at the plasma membrane. Plays an essential role in the selective LPS-induced macrophage response through the activation of NF-kappa-B pathway. In addition, promotes that antiviral immune response through targeting DNA sensor IFI16 to inhibit its proteasome-dependent degradation. Participates in the interferon signaling pathway and antiviral response independently of its deubiquitinase activity by maintaining nuclear phosphorylated STAT1 levels via inhibition of its CREBBP-mediated acetylation and subsequent dephosphorylation. Plays an intrinsic role in promoting the differentiation, activation and proliferation of CD4(+) T-cell by activating the NF-kappa-B signaling pathway through deubiquitinating and stabilizing B-cell lymphoma/leukemia 10/BCL10. In myeloid-derived suppressor cells promotes the activation of the NF-kappa-B via deubiquitination and stabilization of RELA. Regulates the 'Lys-63'-linked polyubiquitin chains of BAX and thereby modulates the mitochondrial apoptotic process. Negative regulator of NOTCH signaling that specifically deubiquitinates non-activated NOTCH receptors to target them for lysosomal degradation; deubiquitination of NOTCH stimulates its transport form late endosomes to lysosomes. Protects neurons against HTT/huntingtin-induced polyglutamine expansion-dependent neurodegeneration through regulation of autophagic flux. This function is independent of deubiquitinase activity or of other components of the USP12-WDR20-WDR48 deubiquitinating complex. In complex with WDR48, acts as a potential tumor suppressor by positively regulating PHLPP1 stability. Its function is as follows. (Microbial infection) Forms a complex with Epstein-Barr virus protein EBNA3 which is an active deubiquitinase activity that may select specific substrates to promote B-lymphocyte transformation. In Homo sapiens (Human), this protein is Ubiquitin carboxyl-terminal hydrolase 12 (USP12).